A 348-amino-acid polypeptide reads, in one-letter code: 4-hydroxy-2-oxovalerate aldolase (348 aa).

Residues 9–261 form the Pyruvate carboxyltransferase domain; it reads ITVHDMTLRD…RTGVDVWKIQ (253 aa). Residue 17 to 18 coordinates substrate; that stretch reads RD. A Mn(2+)-binding site is contributed by aspartate 18. Histidine 21 acts as the Proton acceptor in catalysis. Serine 171 and histidine 200 together coordinate substrate. Residues histidine 200 and histidine 202 each contribute to the Mn(2+) site. Substrate is bound at residue tyrosine 291.

The protein belongs to the 4-hydroxy-2-oxovalerate aldolase family.

The catalysed reaction is (S)-4-hydroxy-2-oxopentanoate = acetaldehyde + pyruvate. The sequence is that of 4-hydroxy-2-oxovalerate aldolase from Ralstonia pickettii (strain 12J).